A 730-amino-acid polypeptide reads, in one-letter code: Diacylglycerol kinase alpha (730 aa).

2 consecutive EF-hand domains span residues 111-146 (RPED…MMRV) and 156-191 (ELRP…TVPL). D124, D126, N128, E135, D169, D171, S173, S175, and E180 together coordinate Ca(2+). 2 Phorbol-ester/DAG-type zinc fingers span residues 206–254 (NHIW…AQPC) and 270–320 (SHLW…GPEC). The DAGKc domain maps to 368–501 (SNTHPLLVFI…LDRWFLEVIP (134 aa)). N6-acetyllysine is present on K479.

It belongs to the eukaryotic diacylglycerol kinase family. Monomer.

The protein resides in the cytoplasm. Its subcellular location is the cytosol. The catalysed reaction is a 1,2-diacyl-sn-glycerol + ATP = a 1,2-diacyl-sn-glycero-3-phosphate + ADP + H(+). It carries out the reaction a 1-O-alkyl-sn-glycerol + ATP = a 1-O-alkyl-sn-glycero-3-phosphate + ADP + H(+). It catalyses the reaction 1-O-alkyl-2-acyl-sn-glycerol + ATP = 1-O-alkyl-2-acyl-sn-glycero-3-phosphate + ADP + H(+). The enzyme catalyses 1,2-dihexadecanoyl-sn-glycerol + ATP = 1,2-dihexadecanoyl-sn-glycero-3-phosphate + ADP + H(+). The catalysed reaction is 1-hexadecanoyl-2-(9Z-octadecenoyl)-sn-glycerol + ATP = 1-hexadecanoyl-2-(9Z-octadecenoyl)-sn-glycero-3-phosphate + ADP + H(+). It carries out the reaction 2-(9Z-octadecenoyl)-glycerol + ATP = 2-(9Z-octadecenoyl)-sn-glycero-3-phosphate + ADP + H(+). It catalyses the reaction 1,2-di-(9Z-octadecenoyl)-sn-glycerol + ATP = 1,2-di-(9Z-octadecenoyl)-sn-glycero-3-phosphate + ADP + H(+). The enzyme catalyses 1-octadecanoyl-2-(5Z,8Z,11Z,14Z-eicosatetraenoyl)-sn-glycerol + ATP = 1-octadecanoyl-2-(5Z,8Z,11Z,14Z-eicosatetraenoyl)-sn-glycero-3-phosphate + ADP + H(+). The catalysed reaction is 1,2-didecanoyl-sn-glycerol + ATP = 1,2-didecanoyl-sn-glycero-3-phosphate + ADP + H(+). It carries out the reaction 1-O-hexadecyl-2-acetyl-sn-glycerol + ATP = 1-O-hexadecyl-2-acetyl-sn-glycero-3-phosphate + ADP + H(+). It catalyses the reaction 1-O-hexadecyl-2-(5Z,8Z,11Z,14Z-eicosatetraenoyl)-sn-glycerol + ATP = 1-O-hexadecyl-2-(5Z,8Z,11Z,14Z-eicosatetraenoyl)-sn-glycero-3-phosphate + ADP + H(+). The enzyme catalyses 1-O-hexadecyl-2-(9Z-octadecenoyl)-sn-glycerol + ATP = 1-O-hexadecyl-2-(9Z-octadecenoyl)-sn-glycero-3-phosphate + ADP + H(+). The catalysed reaction is 1-O-hexadecyl-sn-glycerol + ATP = 1-O-hexadecyl-sn-glycero-3-phosphate + ADP + H(+). Its pathway is lipid metabolism; glycerolipid metabolism. Its activity is regulated as follows. Stimulated by calcium and phosphatidylserine. Diacylglycerol kinase that converts diacylglycerol/DAG into phosphatidic acid/phosphatidate/PA and regulates the respective levels of these two bioactive lipids. Thereby, acts as a central switch between the signaling pathways activated by these second messengers with different cellular targets and opposite effects in numerous biological processes. Also plays an important role in the biosynthesis of complex lipids. Can also phosphorylate 1-alkyl-2-acylglycerol in vitro as efficiently as diacylglycerol provided it contains an arachidonoyl group. Also involved in the production of alkyl-lysophosphatidic acid, another bioactive lipid, through the phosphorylation of 1-alkyl-2-acetyl glycerol. The polypeptide is Diacylglycerol kinase alpha (Dgka) (Mus musculus (Mouse)).